A 219-amino-acid polypeptide reads, in one-letter code: Cytidylate kinase (219 aa).

21–29 (GPAASGKGT) lines the ATP pocket.

This sequence belongs to the cytidylate kinase family. Type 1 subfamily.

The protein resides in the cytoplasm. The catalysed reaction is CMP + ATP = CDP + ADP. It catalyses the reaction dCMP + ATP = dCDP + ADP. In Rickettsia felis (strain ATCC VR-1525 / URRWXCal2) (Rickettsia azadi), this protein is Cytidylate kinase.